Here is a 153-residue protein sequence, read N- to C-terminus: Pheromone-binding protein Gp-9 (153 aa).

The signal sequence occupies residues 1 to 19 (MKTFVLHIFIFALVAFASA). Disulfide bonds link Cys-37–Cys-77, Cys-73–Cys-129, and Cys-118–Cys-138.

Belongs to the PBP/GOBP family. In terms of assembly, homodimer.

It is found in the secreted. Functionally, colony queen number, a major feature of social organization, is associated with worker genotype for Gp-9. Colonies are headed by either a single reproductive queen (monogyne form) or multiple queens (polygyne form). Differences in worker Gp-9 genotypes between social forms may cause differences in workers' abilities to recognize queens and regulate their numbers. The polypeptide is Pheromone-binding protein Gp-9 (Solenopsis saevissima (Fire ant)).